A 408-amino-acid polypeptide reads, in one-letter code: DNA polymerase processivity factor (408 aa).

The Nuclear localization signal motif lies at 344 to 353 (KKRRNLLTKR).

It belongs to the herpesviridae DNA polymerase processivity factor family. In terms of assembly, interacts with the DNA polymerase catalytic subunit. Interacts with the origin-binding protein.

The protein resides in the host nucleus. Functionally, plays an essential role in viral DNA replication by acting as the polymerase accessory subunit. Associates with the viral polymerase to increase its processivity and forms high-affinity direct interactions with DNA. Facilitates the origin-binding protein loading onto DNA thus increasing its ability to assemble into a functional complex capable of unwinding duplex DNA. In Varicella-zoster virus (strain Oka vaccine) (HHV-3), this protein is DNA polymerase processivity factor.